We begin with the raw amino-acid sequence, 479 residues long: DNA polymerase IV (479 aa).

Positions 7–189 (ILHLDMDAFF…MTVRTLPGVG (183 aa)) constitute a UmuC domain. The Mg(2+) site is built by D11 and D105. E106 is an active-site residue. Disordered stretches follow at residues 357-400 (AGDR…GHGW) and 430-479 (DPEL…TSRP). The segment covering 381 to 396 (AERRWPSGHDVRHTEL) has biased composition (basic and acidic residues).

Belongs to the DNA polymerase type-Y family. As to quaternary structure, monomer. Requires Mg(2+) as cofactor.

The protein localises to the cytoplasm. The enzyme catalyses DNA(n) + a 2'-deoxyribonucleoside 5'-triphosphate = DNA(n+1) + diphosphate. In terms of biological role, poorly processive, error-prone DNA polymerase involved in untargeted mutagenesis. Copies undamaged DNA at stalled replication forks, which arise in vivo from mismatched or misaligned primer ends. These misaligned primers can be extended by PolIV. Exhibits no 3'-5' exonuclease (proofreading) activity. May be involved in translesional synthesis, in conjunction with the beta clamp from PolIII. This is DNA polymerase IV from Streptomyces coelicolor (strain ATCC BAA-471 / A3(2) / M145).